Here is a 407-residue protein sequence, read N- to C-terminus: Argininosuccinate synthase (407 aa).

Residues 11–19 (AYSGGLDTS) and alanine 38 each bind ATP. L-citrulline is bound by residues tyrosine 89 and serine 94. Glycine 119 provides a ligand contact to ATP. Residues threonine 121, asparagine 125, and aspartate 126 each contribute to the L-aspartate site. Asparagine 125 serves as a coordination point for L-citrulline. Arginine 129, serine 180, serine 189, glutamate 265, and tyrosine 277 together coordinate L-citrulline.

The protein belongs to the argininosuccinate synthase family. Type 1 subfamily. As to quaternary structure, homotetramer.

The protein localises to the cytoplasm. The catalysed reaction is L-citrulline + L-aspartate + ATP = 2-(N(omega)-L-arginino)succinate + AMP + diphosphate + H(+). It participates in amino-acid biosynthesis; L-arginine biosynthesis; L-arginine from L-ornithine and carbamoyl phosphate: step 2/3. In Magnetococcus marinus (strain ATCC BAA-1437 / JCM 17883 / MC-1), this protein is Argininosuccinate synthase.